The chain runs to 453 residues: O-methyltransferase bik3 (453 aa).

Residues 1–25 (MVSNGISNGTNGTNGTTTNGTNGVN) are disordered. A compositionally biased stretch (low complexity) spans 8 to 25 (NGTNGTNGTTTNGTNGVN). Asp-305 is an S-adenosyl-L-methionine binding site. His-355 acts as the Proton acceptor in catalysis.

Belongs to the class I-like SAM-binding methyltransferase superfamily. Cation-independent O-methyltransferase family. COMT subfamily.

It functions in the pathway secondary metabolite biosynthesis. Functionally, O-methyltransferase; part of the gene cluster that mediates the biosynthesis of bikaverin, a red pigment also considered as a mycotoxin. The first stage is catalyzed by the polyketide synthase bik1, which catalyzes the formation of the intermediate SMA76a also knowm as pre-bikaverin. FAD-dependent monooxygenase bik2 might then be responsible for the oxidation of pre-bikaverin to oxo-pre-bikaverin which is in turn methylated by the O-methyltransferase bik3 to me-oxo-pre-bikaverin. A further cycle of oxydation and methylation by bik2 and bik3 leads to the final product of bikaverin, via a nor-bikaverin intermediate. This is O-methyltransferase bik3 from Gibberella fujikuroi (strain CBS 195.34 / IMI 58289 / NRRL A-6831) (Bakanae and foot rot disease fungus).